The following is a 536-amino-acid chain: Protein ST7 homolog (536 aa).

2 helical membrane passes run 3–23 (CSWTFLWLLWIALVAVLLFAL) and 49–69 (FYVALTGTSSLVSGIILIFEW). Residues 191-218 (LAEEESETVSQAENLLRRALRAIESTLN) are a coiled coil. Residues 465 to 485 (TLMMLLQTFICLAICILAVLA) form a helical membrane-spanning segment.

The protein belongs to the ST7 family.

Its subcellular location is the membrane. In Caenorhabditis elegans, this protein is Protein ST7 homolog.